The chain runs to 427 residues: ATP-sensitive inward rectifier potassium channel 12 (427 aa).

Topologically, residues 1 to 77 are cytoplasmic; the sequence is MTASGRTNPY…LADMFTTCVD (77 aa). Cys75 carries the S-nitrosocysteine modification. The helical transmembrane segment at 78–104 threads the bilayer; that stretch reads IRWRYMLLIFSLAFLASWLLFGVIFWV. Residues Arg79 and Arg81 each coordinate a 1,2-diacyl-sn-glycero-3-phospho-(1D-myo-inositol-4,5-bisphosphate). The Extracellular portion of the chain corresponds to 105-129; that stretch reads IAVAHGDLEPAEAHGRTPCVLQVHG. A disulfide bridge links Cys123 with Cys155. Positions 130 to 146 form an intramembrane region, helical; Pore-forming; the sequence is FMAAFLFSIETQTTIGY. Thr143, Ile144, Gly145, and Tyr146 together coordinate K(+). The Selectivity filter motif lies at 143 to 148; that stretch reads TIGYGL. Residues 147-155 are Extracellular-facing; sequence GLRCVTEEC. A helical transmembrane segment spans residues 156–183; the sequence is PVAVFMVVAQSIVGCIIDSFMIGAIMAK. A 1,2-diacyl-sn-glycero-3-phospho-(1D-myo-inositol-4,5-bisphosphate) contacts are provided by Lys183 and Lys188. The Cytoplasmic segment spans residues 184-427; the sequence is MARPKKRAQT…QRPYRRESEI (244 aa). A compositionally biased stretch (acidic residues) spans 387 to 396; sequence DEEDEVDGEQ. The tract at residues 387-427 is disordered; it reads DEEDEVDGEQDSLGPQARRDFDRPQAGTALEQRPYRRESEI. The PDZ-binding motif lies at 425–427; it reads SEI.

It belongs to the inward rectifier-type potassium channel (TC 1.A.2.1) family. KCNJ12 subfamily. Homotetramer. Forms heteromer with KCNJ4. Association, via its PDZ-recognition domain, with LIN7A, LIN7B, LIN7C, DLG1, CASK and APBA1 plays a key role in its localization and trafficking.

The protein localises to the membrane. The enzyme catalyses K(+)(in) = K(+)(out). Activated by phosphatidylinositol 4,5-biphosphate (PtdIns(4,5)P2). PtdIns(4,5)P2 binding to the cytoplasmic side of the channel triggers a conformation change leading to channel opening. Inward rectifying potassium channel that probably participates in controlling the resting membrane potential in electrically excitable cells. Probably participates in establishing action potential waveform and excitability of neuronal and muscle tissues. Inward rectifier potassium channels are characterized by a greater tendency to allow potassium to flow into the cell rather than out of it. Their voltage dependence is regulated by the concentration of extracellular potassium; as external potassium is raised, the voltage range of the channel opening shifts to more positive voltages. The inward rectification is mainly due to the blockage of outward current by internal magnesium. The sequence is that of ATP-sensitive inward rectifier potassium channel 12 (KCNJ12) from Bos taurus (Bovine).